The primary structure comprises 108 residues: Thaicobrin (108 aa).

The region spanning 1 to 108 (SPPGNWQKAD…IWQKGLWWLG (108 aa)) is the B30.2/SPRY domain.

It belongs to the ohanin/vespryn family. As to expression, expressed by the venom gland.

It is found in the secreted. Neurotoxin that produces dose-dependent hypolocomotion and hyperalgesia in mice. May directly act on the central nervous system, as it is 6500-fold more potent when administered intracerebroventricularly than intraperitoneal. The protein is Thaicobrin of Naja kaouthia (Monocled cobra).